Reading from the N-terminus, the 358-residue chain is Ganglioside-induced differentiation-associated protein 1 (358 aa).

The GST N-terminal domain maps to 24–105 (VHLILYHWTH…YLEQTFLDER (82 aa)). Glycyl lysine isopeptide (Lys-Gly) (interchain with G-Cter in ubiquitin) cross-links involve residues lysine 50, lysine 172, lysine 173, lysine 188, and lysine 190. Positions 153–309 (PAYATTRIRS…LISAVLPTAF (157 aa)) constitute a GST C-terminal domain. Lysine 203 bears the N6-acetyllysine; alternate mark. Lysine 203 participates in a covalent cross-link: Glycyl lysine isopeptide (Lys-Gly) (interchain with G-Cter in ubiquitin); alternate. Residues lysine 206, lysine 207, and lysine 214 each participate in a glycyl lysine isopeptide (Lys-Gly) (interchain with G-Cter in ubiquitin) cross-link. Helical transmembrane passes span 292 to 312 (VLGH…FRVA) and 320 to 340 (LGST…FMLF). Positions 320–358 (LGSTLVVGLLVGMGYFAFMLFRRRLGSMILALRPRPNYF) are required for mitochondrial localization.

The protein belongs to the GST superfamily. In terms of assembly, homodimer. In terms of processing, ubiquitinated by PRKN during mitophagy, leading to its degradation and enhancement of mitophagy. Deubiquitinated by USP30. As to expression, expressed in brain, spinal cord, muscles and intestinal villi. In the central nervous system expressed most prominently in the cortex, cerebellum, thalamus, olfactory bulb, and spinal cord. Expressed also in sciatic nerves and in dorsal root ganglia.

It localises to the mitochondrion outer membrane. The protein localises to the cytoplasm. In terms of biological role, regulates the mitochondrial network by promoting mitochondrial fission. This Mus musculus (Mouse) protein is Ganglioside-induced differentiation-associated protein 1 (Gdap1).